We begin with the raw amino-acid sequence, 158 residues long: C-type lectin BfL-2 (158 aa).

A signal peptide spans 1-21 (MGHFTFIGLCLLAMFLSLSGA). Intrachain disulfides connect cysteine 26–cysteine 37, cysteine 54–cysteine 154, cysteine 61–cysteine 156, and cysteine 129–cysteine 146. The 123-residue stretch at 33 to 155 (KNGLCYKVFS…CETLHPFICQ (123 aa)) folds into the C-type lectin domain. The short motif at 119 to 121 (EPN) is the Mannose-binding element. Residue asparagine 121 is glycosylated (N-linked (GlcNAc...) asparagine). Residues glutamate 127, asparagine 142, and aspartate 143 each contribute to the Ca(2+) site.

It belongs to the true venom lectin family. As to quaternary structure, homodimer; non-covalently linked. In terms of tissue distribution, expressed by the venom gland.

Its subcellular location is the secreted. Mannose-binding lectin which recognizes specific carbohydrate structures and agglutinates a variety of animal cells by binding to cell-surface glycoproteins and glycolipids. May be a calcium-dependent lectin. This chain is C-type lectin BfL-2, found in Bungarus fasciatus (Banded krait).